A 234-amino-acid polypeptide reads, in one-letter code: Probable GTP-binding protein EngB (234 aa).

The region spanning 23 to 209 (AVPEVAFAGR…QRTVAGWLCL (187 aa)) is the EngB-type G domain. GTP contacts are provided by residues 31-38 (GRSNAGKS), 58-62 (GRTQH), 82-85 (DLPG), 149-152 (TKAD), and 187-190 (LFSS). Mg(2+) contacts are provided by Ser38 and Thr60. The segment at 210 to 234 (PEAMPPSPDAEPAKKTPSPDAQRGE) is disordered.

It belongs to the TRAFAC class TrmE-Era-EngA-EngB-Septin-like GTPase superfamily. EngB GTPase family. The cofactor is Mg(2+).

Functionally, necessary for normal cell division and for the maintenance of normal septation. This Ralstonia nicotianae (strain ATCC BAA-1114 / GMI1000) (Ralstonia solanacearum) protein is Probable GTP-binding protein EngB.